Here is a 74-residue protein sequence, read N- to C-terminus: uncharacterized protein (74 aa).

This is an uncharacterized protein from Homo sapiens (Human).